The following is a 260-amino-acid chain: Snake venom serine proteinase 12 (260 aa).

Residues 1–18 (MVLIRVLANLLILQLSYA) form the signal peptide. Positions 19–24 (QKSSEL) are excised as a propeptide. Residues 25-251 (VIGGDECNIN…HLDWIQSIIA (227 aa)) enclose the Peptidase S1 domain. 6 disulfides stabilise this stretch: Cys-31–Cys-163, Cys-50–Cys-66, Cys-98–Cys-258, Cys-142–Cys-212, Cys-174–Cys-191, and Cys-202–Cys-227. The active-site Charge relay system is His-65. Asn-103 carries an N-linked (GlcNAc...) asparagine glycan. The Charge relay system role is filled by Asp-110. Catalysis depends on Ser-206, which acts as the Charge relay system.

It belongs to the peptidase S1 family. Snake venom subfamily. In terms of assembly, monomer. As to expression, expressed by the venom gland.

It localises to the secreted. Snake venom serine protease that may act in the hemostasis system of the prey. The protein is Snake venom serine proteinase 12 of Crotalus adamanteus (Eastern diamondback rattlesnake).